The following is a 622-amino-acid chain: E3 ubiquitin-protein ligase RNF12-A (622 aa).

Disordered regions lie at residues 1 to 26 (MESADSTGKGSIEQSESQRQSQMDRL), 67 to 386 (RLQQ…ESER), and 473 to 514 (NANA…NSRG). Positions 11-21 (SIEQSESQRQS) are enriched in low complexity. Composition is skewed to polar residues over residues 110 to 138 (SVRQTGNTTRSGQRGNQSWRAVSRTNPNS) and 147 to 163 (INVNRTSGNPSMPSLDQ). The span at 216–242 (RSPDQRRTRARTDRSRSPLHHAVDPPI) shows a compositional bias: basic and acidic residues. Residues 247-256 (HSSSQTVDTS) are compositionally biased toward polar residues. The span at 272 to 289 (SSQVQNSSSSNETEGSSR) shows a compositional bias: low complexity. Polar residues predominate over residues 300–317 (VLGTEGQSQSTVHLSNPE). Over residues 318–331 (TRSSSQTPQTDSST) the composition is skewed to low complexity. Over residues 332–341 (NAETTGTGQR) the composition is skewed to polar residues. Residues 355 to 365 (RPGDYRQRDSI) show a composition bias toward basic and acidic residues. Residues 366-382 (ANRTRSRSQTPNNTVTY) are compositionally biased toward polar residues. The RING-type; atypical zinc finger occupies 568–609 (CSVCITEYTEGNKLRKLPCSHEYHIHCIDRWLSENSTCPICR). Residues 619 to 622 (ESIV) carry the PDZ-binding motif.

This sequence belongs to the RNF12 family. As to quaternary structure, forms homodimers through the C-terminal region. The N-terminus interacts with the homeobox of LIM/homeobox factor lhx1/lim1, with lhx3/lim3 and lhx5/lim5, and with the N-terminus of ldb1. As to expression, shows overlapping expression with lhx1/lim1 and ldb1 in the gastrula mesoderm, and expression overlaps with ldb1 throughout early embryogenesis. After gastrulation, expression is gradually restricted to tissues originated from the ectoderm, the neuroectoderm, neural crest and epidermis, and subsequently to the neural tube as well as the head and tailbud region.

It localises to the nucleus. It catalyses the reaction S-ubiquitinyl-[E2 ubiquitin-conjugating enzyme]-L-cysteine + [acceptor protein]-L-lysine = [E2 ubiquitin-conjugating enzyme]-L-cysteine + N(6)-ubiquitinyl-[acceptor protein]-L-lysine.. It participates in protein modification; protein ubiquitination. Functionally, acts as an E3 ubiquitin-protein ligase specific for ldb1, mediating ubiquitination and proteasome-dependent degradation of excess ldb1 in a RING-dependent manner. Does not degrade ldb1 bound to lhx1/lim1, nor lim1 itself and thus contributes to the establishment of proper ldb1-lhx1/lim1 stoichiometry and the formation of a ldb1-lhx1/lim1 complex. Interferes with Spemann organizer function and suppresses secondary axis formation induced by ldb1 and lhx1/lim1. This is E3 ubiquitin-protein ligase RNF12-A (rnf12-a) from Xenopus laevis (African clawed frog).